A 430-amino-acid polypeptide reads, in one-letter code: Asparagine--tRNA ligase (430 aa).

The protein belongs to the class-II aminoacyl-tRNA synthetase family. In terms of assembly, homodimer.

It localises to the cytoplasm. The enzyme catalyses tRNA(Asn) + L-asparagine + ATP = L-asparaginyl-tRNA(Asn) + AMP + diphosphate + H(+). This Staphylococcus saprophyticus subsp. saprophyticus (strain ATCC 15305 / DSM 20229 / NCIMB 8711 / NCTC 7292 / S-41) protein is Asparagine--tRNA ligase.